The chain runs to 247 residues: Carboxy-S-adenosyl-L-methionine synthase (247 aa).

S-adenosyl-L-methionine contacts are provided by residues tyrosine 39, 64-66 (GCS), 89-90 (DN), 117-118 (DI), asparagine 132, and arginine 199.

Belongs to the class I-like SAM-binding methyltransferase superfamily. Cx-SAM synthase family. Homodimer.

It catalyses the reaction prephenate + S-adenosyl-L-methionine = carboxy-S-adenosyl-L-methionine + 3-phenylpyruvate + H2O. In terms of biological role, catalyzes the conversion of S-adenosyl-L-methionine (SAM) to carboxy-S-adenosyl-L-methionine (Cx-SAM). This is Carboxy-S-adenosyl-L-methionine synthase from Escherichia coli O17:K52:H18 (strain UMN026 / ExPEC).